Reading from the N-terminus, the 311-residue chain is MAEMDPVAEFPQPPGAARWAEVMARFAARLGAQGRRVVLVTSGGTKVPLEARPVRFLDNFSSGRRGATSAEAFLAAGYGVLFLYRARSAFPYAHRFPPQTWLSALRPSGPALSGLLSLEAEENALPGFAEALRSYQEAAAAGTFLAVEFTTLADYLHLLQAAAQALNPLGPSAMFYLAAAVSDFYVPVSEMPEHKIQSSGGPLQITMKMVPKLLSPLVKDWAPKAFIISFKLETDPAIVINRARKALEIYQHQVVVANILESRQSFVFIVTKDSETKLLLSEEEIEKGVEIEEKIVDNLQSRHTAFIGDRN.

N-acetylalanine is present on Ala2.

It belongs to the PPC synthetase family. As to quaternary structure, homodimer.

The enzyme catalyses (R)-4'-phosphopantothenate + L-cysteine + ATP = N-[(R)-4-phosphopantothenoyl]-L-cysteine + AMP + diphosphate + H(+). It carries out the reaction (R)-4'-phosphopantothenate + L-cysteine + CTP = N-[(R)-4-phosphopantothenoyl]-L-cysteine + CMP + diphosphate + H(+). Its pathway is cofactor biosynthesis; coenzyme A biosynthesis; CoA from (R)-pantothenate: step 2/5. Functionally, catalyzes the second step in the biosynthesis of coenzyme A from vitamin B5, where cysteine is conjugated to 4'-phosphopantothenate to form 4-phosphopantothenoylcysteine. Has a preference for ATP over CTP as a cosubstrate. The chain is Phosphopantothenate--cysteine ligase (PPCS) from Homo sapiens (Human).